We begin with the raw amino-acid sequence, 155 residues long: Endoribonuclease YbeY (155 aa).

Zn(2+) is bound by residues H120, H124, and H130.

This sequence belongs to the endoribonuclease YbeY family. Zn(2+) is required as a cofactor.

Its subcellular location is the cytoplasm. Single strand-specific metallo-endoribonuclease involved in late-stage 70S ribosome quality control and in maturation of the 3' terminus of the 16S rRNA. The protein is Endoribonuclease YbeY of Staphylococcus aureus (strain Mu3 / ATCC 700698).